A 255-amino-acid polypeptide reads, in one-letter code: Hydroxyacylglutathione hydrolase (255 aa).

Zn(2+) is bound by residues H56, H58, D60, H61, H114, D133, and H171.

Belongs to the metallo-beta-lactamase superfamily. Glyoxalase II family. Monomer. The cofactor is Zn(2+).

It catalyses the reaction an S-(2-hydroxyacyl)glutathione + H2O = a 2-hydroxy carboxylate + glutathione + H(+). It participates in secondary metabolite metabolism; methylglyoxal degradation; (R)-lactate from methylglyoxal: step 2/2. Functionally, thiolesterase that catalyzes the hydrolysis of S-D-lactoyl-glutathione to form glutathione and D-lactic acid. The polypeptide is Hydroxyacylglutathione hydrolase (Bradyrhizobium sp. (strain BTAi1 / ATCC BAA-1182)).